Consider the following 248-residue polypeptide: 5'-nucleotidase SurE (248 aa).

The a divalent metal cation site is built by Asp-8, Asp-9, Ser-39, and Asn-91.

Belongs to the SurE nucleotidase family. A divalent metal cation serves as cofactor.

The protein localises to the cytoplasm. The catalysed reaction is a ribonucleoside 5'-phosphate + H2O = a ribonucleoside + phosphate. In terms of biological role, nucleotidase that shows phosphatase activity on nucleoside 5'-monophosphates. This chain is 5'-nucleotidase SurE, found in Geotalea uraniireducens (strain Rf4) (Geobacter uraniireducens).